The chain runs to 2075 residues: Autophagy-related protein 2 homolog B (2075 aa).

The Chorein N-terminal domain maps to 13 to 107 (ACRYLLQRYL…LEMVFRPRPR (95 aa)). 7 positions are modified to phosphoserine: Ser-255, Ser-379, Ser-496, Ser-839, Ser-885, Ser-898, and Ser-1007. Residue Tyr-1011 is modified to Phosphotyrosine. 2 positions are modified to phosphoserine: Ser-1015 and Ser-1017. At Thr-1021 the chain carries Phosphothreonine. Residues 1373 to 1403 (KAEMKPGVPQRKPKVDSSARSSSHGPVLPEA) form a disordered region. Ser-1525 is modified (phosphoserine). Disordered stretches follow at residues 1570–1593 (TSPA…GRHT), 1759–1792 (EPNL…EDVS), and 2055–2075 (RNQI…HGED). Polar residues predominate over residues 1578–1587 (PHSSPSQTPT). Residues 2058–2075 (IRPDVRQDESQKWRHGED) are compositionally biased toward basic and acidic residues.

It belongs to the ATG2 family. In terms of assembly, interacts with WDR45/WIPI4.

It localises to the preautophagosomal structure membrane. The protein resides in the lipid droplet. It is found in the endoplasmic reticulum membrane. It carries out the reaction a 1,2-diacyl-sn-glycero-3-phospho-L-serine(in) = a 1,2-diacyl-sn-glycero-3-phospho-L-serine(out). The enzyme catalyses a 1,2-diacyl-sn-glycero-3-phosphoethanolamine(in) = a 1,2-diacyl-sn-glycero-3-phosphoethanolamine(out). In terms of biological role, lipid transfer protein required for both autophagosome formation and regulation of lipid droplet morphology and dispersion. Tethers the edge of the isolation membrane (IM) to the endoplasmic reticulum (ER) and mediates direct lipid transfer from ER to IM for IM expansion. Binds to the ER exit site (ERES), which is the membrane source for autophagosome formation, and extracts phospholipids from the membrane source and transfers them to ATG9 (ATG9A or ATG9B) to the IM for membrane expansion. Lipid transfer activity is enhanced by WDR45/WIPI4, which promotes ATG2B-association with phosphatidylinositol 3-monophosphate (PI3P)-containing membranes. The chain is Autophagy-related protein 2 homolog B from Mus musculus (Mouse).